We begin with the raw amino-acid sequence, 84 residues long: Neurotoxin BM10-1-like (84 aa).

Positions 1-21 (MKTLLLTLVVVTIVCLDLGYT) are cleaved as a signal peptide. 5 disulfides stabilise this stretch: C24–C47, C27–C32, C40–C64, C68–C76, and C77–C82.

This sequence belongs to the three-finger toxin family. Ancestral subfamily. Orphan group IV sub-subfamily. As to expression, expressed by the venom gland.

Its subcellular location is the secreted. In terms of biological role, binds and inhibits muscular and neuronal nicotinic acetylcholine receptors (nAChR). The sequence is that of Neurotoxin BM10-1-like from Bungarus multicinctus (Many-banded krait).